Reading from the N-terminus, the 384-residue chain is Prostaglandin E synthase 2 (384 aa).

Residues M1 to R56 are Lumenal-facing. Residues L57–H73 form a helical membrane-spanning segment. Residues T74–D384 lie on the Cytoplasmic side of the membrane. The Glutaredoxin domain maps to S89–K192. Glutathione contacts are provided by residues V147 and D163–S164. The GST C-terminal domain maps to Y262–H376.

Belongs to the GST superfamily. As to quaternary structure, homodimer. Interacts with EXOSC10. May interact with CEBPB. In terms of processing, synthesized as a Golgi membrane-associated protein, and the proteolytic removal of the N-terminal hydrophobic domain leads to the formation of a mature cytosolic enzyme. In terms of tissue distribution, widely expressed. Expressed in brain, heart, liver, colon and lung.

It localises to the golgi apparatus membrane. It is found in the nucleus. The protein localises to the cytoplasm. It carries out the reaction prostaglandin H2 = prostaglandin E2. The catalysed reaction is prostaglandin H2 = (12S)-hydroxy-(5Z,8E,10E)-heptadecatrienoate + malonaldehyde. It functions in the pathway lipid metabolism; prostaglandin biosynthesis. Its activity is regulated as follows. Isomerase activity is increased by sulfhydril compounds. Dithiothreitol (DTT) is most effective, followed by glutathione (GSH) and 2-mercaptoethanol. In terms of biological role, isomerase that catalyzes the conversion of PGH2 into the more stable prostaglandin E2 (PGE2) (in vitro). The biological function and the GSH-dependent property of PTGES2 is still under debate. In vivo, PTGES2 could form a complex with GSH and heme and would not participate in PGE2 synthesis but would catalyze the degradation of prostaglandin E2 H2 (PGH2) to 12(S)-hydroxy-5(Z),8(E),10(E)-heptadecatrienoic acid (HHT) and malondialdehyde (MDA). May also have transactivation activity toward IFN-gamma (IFNG), possibly via an interaction with CEBPB; however, the relevance of transcription activation activity remains unclear. The polypeptide is Prostaglandin E synthase 2 (Ptges2) (Mus musculus (Mouse)).